The sequence spans 382 residues: Lipid-A-disaccharide synthase (382 aa).

The protein belongs to the LpxB family.

It catalyses the reaction 2-N,3-O-bis[(3R)-3-hydroxytetradecanoyl]-alpha-D-glucosaminyl 1-phosphate + UDP-2-N,3-O-bis[(3R)-3-hydroxytetradecanoyl]-alpha-D-glucosamine = lipid A disaccharide (E. coli) + UDP + H(+). It carries out the reaction a lipid X + a UDP-2-N,3-O-bis[(3R)-3-hydroxyacyl]-alpha-D-glucosamine = a lipid A disaccharide + UDP + H(+). It functions in the pathway glycolipid biosynthesis; lipid IV(A) biosynthesis; lipid IV(A) from (3R)-3-hydroxytetradecanoyl-[acyl-carrier-protein] and UDP-N-acetyl-alpha-D-glucosamine: step 5/6. Functionally, condensation of UDP-2,3-diacylglucosamine and 2,3-diacylglucosamine-1-phosphate to form lipid A disaccharide, a precursor of lipid A, a phosphorylated glycolipid that anchors the lipopolysaccharide to the outer membrane of the cell. This chain is Lipid-A-disaccharide synthase, found in Shigella flexneri.